We begin with the raw amino-acid sequence, 114 residues long: Flagellar hook-basal body complex protein FliE (114 aa).

Belongs to the FliE family.

The protein resides in the bacterial flagellum basal body. This is Flagellar hook-basal body complex protein FliE from Desulfitobacterium hafniense (strain DSM 10664 / DCB-2).